We begin with the raw amino-acid sequence, 255 residues long: 5'-nucleotidase SurE (255 aa).

Positions 8, 9, 39, and 91 each coordinate a divalent metal cation.

This sequence belongs to the SurE nucleotidase family. It depends on a divalent metal cation as a cofactor.

The protein localises to the cytoplasm. The catalysed reaction is a ribonucleoside 5'-phosphate + H2O = a ribonucleoside + phosphate. In terms of biological role, nucleotidase that shows phosphatase activity on nucleoside 5'-monophosphates. The protein is 5'-nucleotidase SurE of Acinetobacter baumannii (strain ATCC 17978 / DSM 105126 / CIP 53.77 / LMG 1025 / NCDC KC755 / 5377).